The chain runs to 250 residues: Cobalt transport protein CbiM (250 aa).

The first 26 residues, 1–26 (MNKKEKRIVAIAAAFALCFGISPAVN), serve as a signal peptide directing secretion. The next 6 membrane-spanning stretches (helical) occupy residues 38-58 (KYCI…YFSI), 68-88 (SITM…LKIP), 102-122 (LGAI…VLIF), 134-154 (TLGA…FGIY), 165-185 (LSGI…VTSI), and 209-229 (FAPT…VIMI).

The protein belongs to the CbiM family. As to quaternary structure, forms an energy-coupling factor (ECF) transporter complex composed of an ATP-binding protein (A component, CbiO), a transmembrane protein (T component, CbiQ) and 2 possible substrate-capture proteins (S components, CbiM and CbiN) of unknown stoichimetry.

It localises to the cell membrane. It participates in cofactor biosynthesis; adenosylcobalamin biosynthesis. Functionally, part of the energy-coupling factor (ECF) transporter complex CbiMNOQ involved in cobalt import. The chain is Cobalt transport protein CbiM from Lachnoclostridium phytofermentans (strain ATCC 700394 / DSM 18823 / ISDg) (Clostridium phytofermentans).